Consider the following 510-residue polypeptide: Sucrose transport protein SUC4 (510 aa).

The disordered stretch occupies residues 1 to 34 (MATSDQDRRHRVTRNRPPIARPSTSSSRPVVSPP). At 1–45 (MATSDQDRRHRVTRNRPPIARPSTSSSRPVVSPPRSKVSKRVLLR) the chain is on the cytoplasmic side. A compositionally biased stretch (low complexity) spans 21–34 (RPSTSSSRPVVSPP). At S23 the chain carries Phosphoserine. Residues 46–66 (VASVACGIQFGWALQLSLLTP) form a helical membrane-spanning segment. Topologically, residues 67–71 (YVQEL) are extracellular. A helical membrane pass occupies residues 72-92 (GIPHAWASVIWLCGPLSGLFV). Topologically, residues 93-111 (QPLVGHSSDRCTSKYGRRR) are cytoplasmic. The chain crosses the membrane as a helical span at residues 112–132 (PFIVAGAVAISISVMVIGHAA). The Extracellular portion of the chain corresponds to 133 to 148 (DIGWAFGDREGKIKPR). Residues 149–169 (AIVAFVLGFWILDVANNMTQG) form a helical membrane-spanning segment. At 170-187 (PCRALLADLTENDNRRTR) the chain is on the cytoplasmic side. The helical transmembrane segment at 188 to 208 (VANGYFSLFMAVGNVLGYATG) threads the bilayer. Over 209 to 233 (SYNGWYKIFTFTKTVACNVECANLK) the chain is Extracellular. A helical membrane pass occupies residues 234–254 (SAFYIDVVFIAITTILSVSAA). At 255–291 (HEVPLASLASEAHGQTSGTDEAFLSEIFGTFRYFPGN) the chain is on the cytoplasmic side. Residues 292–312 (VWIILLVTALTWIGWFPFILF) form a helical membrane-spanning segment. At 313 to 335 (DTDWMGREIYGGEPNIGTSYSAG) the chain is on the extracellular side. The chain crosses the membrane as a helical span at residues 336–356 (VSMGALGLMLNSVFLGITSVL). Residues 357–365 (MEKLCRKWG) lie on the Cytoplasmic side of the membrane. Residues 366-386 (AGFVWGISNILMAICFLGMII) traverse the membrane as a helical segment. Residues 387–402 (TSFVASHLGYIGHEQP) are Extracellular-facing. A helical membrane pass occupies residues 403-423 (PASIVFAAVLIFTILGIPLAI). The Cytoplasmic segment spans residues 424 to 443 (TYSVPYALISIRIESLGLGQ). A helical membrane pass occupies residues 444–464 (GLSLGVLNLAIVIPQVIVSVG). Topologically, residues 465-477 (SGPWDQLFGGGNS) are extracellular. Residues 478 to 498 (PALAVGAATGFIGGIVAILAL) form a helical membrane-spanning segment. Residues 499–510 (PRTRIQKPIPLP) lie on the Cytoplasmic side of the membrane.

This sequence belongs to the glycoside-pentoside-hexuronide (GPH) cation symporter transporter (TC 2.A.2.4) family. Homodimer. Interacts with SUC2 and SUC3. As to expression, expressed in sink tissues, mostly in minor veins of sink leaves. Localized in companion cells.

The protein localises to the cell membrane. It catalyses the reaction sucrose(out) + H(+)(out) = sucrose(in) + H(+)(in). The protein operates within glycan biosynthesis; sucrose metabolism. In terms of biological role, responsible for the transport of sucrose into the cell, with the concomitant uptake of protons (symport system). Can also transport maltose at a lesser rate. May also transport biotin. This is Sucrose transport protein SUC4 from Arabidopsis thaliana (Mouse-ear cress).